The following is a 911-amino-acid chain: Isoleucine--tRNA ligase (911 aa).

The 'HIGH' region signature appears at P57 to H67. An L-isoleucyl-5'-AMP-binding site is contributed by E564. Residues K605–S609 carry the 'KMSKS' region motif. K608 contacts ATP. Residues C887, C890, C902, and C905 each contribute to the Zn(2+) site.

It belongs to the class-I aminoacyl-tRNA synthetase family. IleS type 1 subfamily. As to quaternary structure, monomer. It depends on Zn(2+) as a cofactor.

Its subcellular location is the cytoplasm. The catalysed reaction is tRNA(Ile) + L-isoleucine + ATP = L-isoleucyl-tRNA(Ile) + AMP + diphosphate. Catalyzes the attachment of isoleucine to tRNA(Ile). As IleRS can inadvertently accommodate and process structurally similar amino acids such as valine, to avoid such errors it has two additional distinct tRNA(Ile)-dependent editing activities. One activity is designated as 'pretransfer' editing and involves the hydrolysis of activated Val-AMP. The other activity is designated 'posttransfer' editing and involves deacylation of mischarged Val-tRNA(Ile). The polypeptide is Isoleucine--tRNA ligase (Nautilia profundicola (strain ATCC BAA-1463 / DSM 18972 / AmH)).